A 430-amino-acid chain; its full sequence is Paraneoplastic antigen-like protein 8A (430 aa).

Residues 219–228 (WKNTEDHGDP) show a composition bias toward basic and acidic residues. Disordered regions lie at residues 219-270 (WKNT…NSNY), 313-364 (DPSD…RKKK), and 392-430 (GLGA…SRKL). Residues 232-250 (LVRRPGGKIRSRRRKQKKN) show a composition bias toward basic residues. A compositionally biased stretch (polar residues) spans 261–270 (SQGSNYNSNY).

This sequence belongs to the PNMA family.

The sequence is that of Paraneoplastic antigen-like protein 8A from Mus musculus (Mouse).